Reading from the N-terminus, the 233-residue chain is Superoxide dismutase [Mn], mitochondrial (233 aa).

A mitochondrion-targeting transit peptide spans 1 to 27 (MALRSLVTRKNLPSAFKAATGLGQLRG). Residues histidine 55, histidine 103, aspartate 192, and histidine 196 each coordinate Mn(2+).

Belongs to the iron/manganese superoxide dismutase family. In terms of assembly, homotetramer. It depends on Mn(2+) as a cofactor. In terms of tissue distribution, present in all tissues examined (leaf, petiole, root, latex, callus) with young leaves showing the highest levels in intact plants.

It localises to the mitochondrion matrix. It catalyses the reaction 2 superoxide + 2 H(+) = H2O2 + O2. Functionally, destroys superoxide anion radicals which are normally produced within the cells and which are toxic to biological systems. This is Superoxide dismutase [Mn], mitochondrial (SODA) from Hevea brasiliensis (Para rubber tree).